Here is a 117-residue protein sequence, read N- to C-terminus: Structural toxin peptide sea anemone type 9a (117 aa).

A signal peptide spans 1-23 (MKTIIAIFSLAAMIVLVRPTPLE). Repeat copies occupy residues 28–56 (TRSI…GCQE), 57–88 (KRNI…NEAV), and 89–117 (KRAI…HGCS). Residues 29-117 (RSIINVPCKK…GKCRKIHGCS (89 aa)) form a 3 X approximate tandem repeats region.

Contains 6 disulfide bonds. As to expression, expressed outside of acontia.

The protein resides in the secreted. It localises to the nematocyst. Putative neurotoxin. The protein is Structural toxin peptide sea anemone type 9a of Calliactis polypus (Hermit crab anemone).